Reading from the N-terminus, the 192-residue chain is Large ribosomal subunit protein bL9 (192 aa).

Residues 172 to 192 form a disordered region; it reads DALRPEDFFDPEADGVDEDEA. Over residues 179 to 192 the composition is skewed to acidic residues; that stretch reads FFDPEADGVDEDEA.

This sequence belongs to the bacterial ribosomal protein bL9 family.

Functionally, binds to the 23S rRNA. This chain is Large ribosomal subunit protein bL9, found in Rhizobium johnstonii (strain DSM 114642 / LMG 32736 / 3841) (Rhizobium leguminosarum bv. viciae).